The primary structure comprises 424 residues: Serine--tRNA ligase (424 aa).

Residue 231-233 (TAE) coordinates L-serine. ATP is bound by residues 262 to 264 (RRE) and V278. Position 285 (E285) interacts with L-serine. Residue 349-352 (EVSS) participates in ATP binding. S384 serves as a coordination point for L-serine.

The protein belongs to the class-II aminoacyl-tRNA synthetase family. Type-1 seryl-tRNA synthetase subfamily. As to quaternary structure, homodimer. The tRNA molecule binds across the dimer.

The protein localises to the cytoplasm. It catalyses the reaction tRNA(Ser) + L-serine + ATP = L-seryl-tRNA(Ser) + AMP + diphosphate + H(+). It carries out the reaction tRNA(Sec) + L-serine + ATP = L-seryl-tRNA(Sec) + AMP + diphosphate + H(+). Its pathway is aminoacyl-tRNA biosynthesis; selenocysteinyl-tRNA(Sec) biosynthesis; L-seryl-tRNA(Sec) from L-serine and tRNA(Sec): step 1/1. Functionally, catalyzes the attachment of serine to tRNA(Ser). Is also able to aminoacylate tRNA(Sec) with serine, to form the misacylated tRNA L-seryl-tRNA(Sec), which will be further converted into selenocysteinyl-tRNA(Sec). In Chlamydia abortus (strain DSM 27085 / S26/3) (Chlamydophila abortus), this protein is Serine--tRNA ligase.